We begin with the raw amino-acid sequence, 803 residues long: MNSAEQTVTWLITLGVLESPKKTISDPEGFLQASLKDGVVLCRLLERLLPGTIEKVYPEPRSESECLSNIREFLRGCGASLRLELLFPPSQPPQHLVTTILLSASTFDANDLYQGQNFNKVLSSLVTLNKVTADIGLGSDSVCARPSSHRIKSFDSLGSQSLHTRTSKLFQGQYRSLDMTDNSNNQLVVRAKFNFQQTNEDELSFSKGDVIHVTRVEEGGWWEGTLNGRTGWFPSNYVREVKASEKPVSPKSGTLKSPPKGFDTTAINKSYYNVVLQNILETENEYSKELQTVLSTYLRPLQTSEKLSSANISYLMGNLEEICSFQQMLVQSLEECTKLPEAQQRVGGCFLNLMPQMKTLYLTYCANHPSAVNVLTEHSEELGEFMETKGASSPGILVLTTGLSKPFMRLDKYPTLLKELERHMEDYHTDRQDIQKSMAAFKNLSAQCQEVRKRKELELQILTEAIRNWEGDDIKTLGNVTYMSQVLIQCAGSEEKNERYLLLFPNVLLMLSASPRMSGFIYQGKLPTTGMTITKLEDSENHRNAFEISGSMIERILVSCNNQQDLQEWVEHLQKQTKVTSVGNPTIKPHSVPSHTLPSHPVTPSSKHADSKPAPLTPAYHTLPHPSHHGTPHTTINWGPLEPPKTPKPWSLSCLRPAPPLRPSAALCYKEDLSKSPKTMKKLLPKRKPERKPSDEEFASRKSTAALEEDAQILKVIEAYCTSAKTRQTLNSTWQGTDLMHNHVLADDDQPSLDSLGRRSSLSRLEPSDLSEDSDYDSIWTAHSYRMGSTSRKSCCSYISHQN.

Methionine 1 bears the N-acetylmethionine mark. A Calponin-homology (CH) domain is found at 1-133 (MNSAEQTVTW…SLVTLNKVTA (133 aa)). An N-acetylthreonine modification is found at asparagine 2. Phosphoserine is present on residues serine 153 and serine 176. In terms of domain architecture, SH3 spans 184-243 (NNQLVVRAKFNFQQTNEDELSFSKGDVIHVTRVEEGGWWEGTLNGRTGWFPSNYVREVKA). Residues serine 249 and serine 257 each carry the phosphoserine modification. The 181-residue stretch at 271-451 (YYNVVLQNIL…KNLSAQCQEV (181 aa)) folds into the DH domain. The PH domain occupies 473 to 578 (DIKTLGNVTY…WVEHLQKQTK (106 aa)). A phosphoserine mark is found at serine 518, cysteine 560, and valine 579. The interval 580–655 (TSVGNPTIKP…TPKPWSLSCL (76 aa)) is disordered. The span at 593 to 606 (PSHTLPSHPVTPSS) shows a compositional bias: polar residues. Residues lysine 645 and serine 664 each carry the phosphoserine modification. Positions 678-690 (KTMKKLLPKRKPE) are enriched in basic residues. Disordered regions lie at residues 678 to 704 (KTMK…RKST) and 748 to 773 (DDQP…LSED). Residues 691–700 (RKPSDEEFAS) show a composition bias toward basic and acidic residues. The residue at position 694 (serine 694) is a Phosphoserine; by CaMK1. Residues 752–765 (SLDSLGRRSSLSRL) show a composition bias toward low complexity.

Interacts with PAK kinases through the SH3 domain. Interacts with GIT1 and TGFB1I1. Interacts with PTK2/FAK1 and RAC1. Interacts with ITCH and PARVB. Interacts with unphosphorylated PAK1. Interacts with SCRIB; interaction is direct and may play a role in regulation of apoptosis. Interacts with FRMPD4 (via N-terminus). Interacts with CaMK1. Interacts with BIN2. Interacts with YWHAZ. Interacts (via PH domain) with NOX1 (via FAD-binding FR-type domain). In terms of assembly, interacts with SNX27. In terms of processing, phosphorylated by PTK2/FAK1; this promotes interaction with RAC1. Phosphorylated on Ser-694 by CaMK1; enhancement of GEF activity and downstream activation of RAC1.

It localises to the cell junction. The protein localises to the focal adhesion. The protein resides in the cell projection. It is found in the ruffle. Its subcellular location is the cytoplasm. It localises to the cell cortex. The protein localises to the lamellipodium. Its function is as follows. Acts as a RAC1 guanine nucleotide exchange factor (GEF) and can induce membrane ruffling. Functions in cell migration, attachment and cell spreading. Promotes targeting of RAC1 to focal adhesions. May function as a positive regulator of apoptosis. Downstream of NMDA receptors and CaMKK-CaMK1 signaling cascade, promotes the formation of spines and synapses in hippocampal neurons. The protein is Rho guanine nucleotide exchange factor 7 (ARHGEF7) of Homo sapiens (Human).